Here is a 129-residue protein sequence, read N- to C-terminus: Small ribosomal subunit protein uS9 (129 aa).

This sequence belongs to the universal ribosomal protein uS9 family.

The polypeptide is Small ribosomal subunit protein uS9 (Gemmatimonas aurantiaca (strain DSM 14586 / JCM 11422 / NBRC 100505 / T-27)).